The chain runs to 407 residues: Polygalacturonase (407 aa).

The N-terminal stretch at 1–26 is a signal peptide; it reads MAPHLNIVPSMFVLLLLFISASKVQP. PbH1 repeat units follow at residues 180 to 206 and 207 to 228; these read CKNI…HMGK and SEGV…SIGD. An N-linked (GlcNAc...) asparagine glycan is attached at asparagine 182. Aspartate 221 (proton donor) is an active-site residue. Cysteine 223 and cysteine 240 are oxidised to a cystine. Histidine 244 is an active-site residue. 2 PbH1 repeats span residues 260-281 and 290-311; these read VEGI…RIKT and VSEI…LIDQ. Residues asparagine 267, asparagine 272, asparagine 302, and asparagine 331 are each glycosylated (N-linked (GlcNAc...) asparagine). Cystine bridges form between cysteine 351–cysteine 357 and cysteine 379–cysteine 395. One copy of the PbH1 5 repeat lies at 357–384; sequence CQNVELADIDIQHNGAEPATSQCLNVKP.

This sequence belongs to the glycosyl hydrolase 28 family. As to expression, pollen.

Its subcellular location is the secreted. It localises to the cell wall. The enzyme catalyses (1,4-alpha-D-galacturonosyl)n+m + H2O = (1,4-alpha-D-galacturonosyl)n + (1,4-alpha-D-galacturonosyl)m.. In terms of biological role, may function in the depolymerization of the pectin in its walls during pollen tube elongation, or in that of the pistil during pollination. The protein is Polygalacturonase (G9) of Gossypium barbadense (Sea Island cotton).